Reading from the N-terminus, the 380-residue chain is Forkhead box protein F1 (380 aa).

Over residues 1–19 (MTAEVQQPSVQTPAHSSPM) the composition is skewed to polar residues. The tract at residues 1-49 (MTAEVQQPSVQTPAHSSPMTEKPVQTPVMETSSSSSSTKAKKTNAGIRR) is disordered. A DNA-binding region (fork-head) is located at residues 52-146 (KPPYSYIALI…EEGSFRRRPR (95 aa)).

It is found in the nucleus. This is Forkhead box protein F1 (foxf1) from Danio rerio (Zebrafish).